A 281-amino-acid polypeptide reads, in one-letter code: Putative E3 ubiquitin-protein ligase SINA-like 6 (281 aa).

The disordered stretch occupies residues Met-1–Arg-26. Residues Cys-45–Ala-81 form an RING-type zinc finger. The interval Val-95–Gln-280 is SBD. An SIAH-type zinc finger spans residues Ser-98–Ser-156. Residues Cys-103, Cys-110, His-122, Cys-126, Cys-133, Cys-138, His-150, and His-155 each contribute to the Zn(2+) site.

The protein belongs to the SINA (Seven in absentia) family.

The enzyme catalyses S-ubiquitinyl-[E2 ubiquitin-conjugating enzyme]-L-cysteine + [acceptor protein]-L-lysine = [E2 ubiquitin-conjugating enzyme]-L-cysteine + N(6)-ubiquitinyl-[acceptor protein]-L-lysine.. It functions in the pathway protein modification; protein ubiquitination. In terms of biological role, E3 ubiquitin-protein ligase that mediates ubiquitination and subsequent proteasomal degradation of target proteins. E3 ubiquitin ligases accept ubiquitin from an E2 ubiquitin-conjugating enzyme in the form of a thioester and then directly transfers the ubiquitin to targeted substrates. It probably triggers the ubiquitin-mediated degradation of different substrates. The chain is Putative E3 ubiquitin-protein ligase SINA-like 6 from Arabidopsis thaliana (Mouse-ear cress).